A 203-amino-acid polypeptide reads, in one-letter code: N-(5'-phosphoribosyl)anthranilate isomerase (203 aa).

It belongs to the TrpF family.

The catalysed reaction is N-(5-phospho-beta-D-ribosyl)anthranilate = 1-(2-carboxyphenylamino)-1-deoxy-D-ribulose 5-phosphate. Its pathway is amino-acid biosynthesis; L-tryptophan biosynthesis; L-tryptophan from chorismate: step 3/5. The polypeptide is N-(5'-phosphoribosyl)anthranilate isomerase (Thermoanaerobacter pseudethanolicus (strain ATCC 33223 / 39E) (Clostridium thermohydrosulfuricum)).